The following is a 518-amino-acid chain: Bifunctional purine biosynthesis protein PurH (518 aa).

The 144-residue stretch at 1-144 (MNRRAVLSVS…KNQERVSIVV (144 aa)) folds into the MGS-like domain.

The protein belongs to the PurH family.

The catalysed reaction is (6R)-10-formyltetrahydrofolate + 5-amino-1-(5-phospho-beta-D-ribosyl)imidazole-4-carboxamide = 5-formamido-1-(5-phospho-D-ribosyl)imidazole-4-carboxamide + (6S)-5,6,7,8-tetrahydrofolate. The enzyme catalyses IMP + H2O = 5-formamido-1-(5-phospho-D-ribosyl)imidazole-4-carboxamide. It participates in purine metabolism; IMP biosynthesis via de novo pathway; 5-formamido-1-(5-phospho-D-ribosyl)imidazole-4-carboxamide from 5-amino-1-(5-phospho-D-ribosyl)imidazole-4-carboxamide (10-formyl THF route): step 1/1. The protein operates within purine metabolism; IMP biosynthesis via de novo pathway; IMP from 5-formamido-1-(5-phospho-D-ribosyl)imidazole-4-carboxamide: step 1/1. The protein is Bifunctional purine biosynthesis protein PurH of Desulfitobacterium hafniense (strain DSM 10664 / DCB-2).